A 388-amino-acid polypeptide reads, in one-letter code: Fibrinogen- and Ig-binding protein (388 aa).

An N-terminal signal peptide occupies residues 1-41 (MSKTNPNKLYSLRKLKTGTASVAVDLTVLGTGLANTTDVKA). D repeat units follow at residues 288-293 (EKLEAE), 294-299 (AKALKE), 302-307 (AKQAEE), and 309-314 (AKLKAD). The interval 308 to 362 (LAKLKADKASGAQKPDTKPGNKEVPTRPSQTRTNTNKAPMAQTKRQLPSTGEETT) is disordered. Over residues 322–332 (PDTKPGNKEVP) the composition is skewed to basic and acidic residues. Residues 334–362 (RPSQTRTNTNKAPMAQTKRQLPSTGEETT) are compositionally biased toward polar residues. The short motif at 354-358 (LPSTG) is the LPXTG sorting signal element. Pentaglycyl murein peptidoglycan amidated threonine is present on threonine 357. The propeptide at 358-388 (GEETTNPFFTAAALTVIASAGVLALKRKEEN) is removed by sortase.

Its subcellular location is the secreted. It localises to the cell wall. Its function is as follows. Binds IgG molecules of the Ig1, Ig2 and Ig4 subclasses, and also binds fibrinogen. The chain is Fibrinogen- and Ig-binding protein (mrp4) from Streptococcus pyogenes.